The sequence spans 317 residues: Transcription factor EC (317 aa).

Positions 1–90 are necessary for transcriptional transactivation; that stretch reads MTLDHRLFSQ…GLMNASCPSI (90 aa). The region spanning 110-163 is the bHLH domain; it reads QKKDNHNLIERRRRYNINYRIKELGTLIPKSNDPDIRWNKGTILKASVDYIKWL. Residues 242–317 are necessary for transcriptional transactivation; the sequence is TSPEFYEQAV…SLSSEDGDEL (76 aa).

This sequence belongs to the MiT/TFE family. In terms of assembly, homodimer. Forms heterodimers with TFE3. Forms heterodimers with MITF. Interacts with MITF. As to expression, expressed in kidney, spleen, lung, liver, testis and muscle.

The protein localises to the nucleus. Functionally, transcriptional regulator that acts as a repressor or an activator. Acts as a transcriptional repressor on minimal promoter containing mu E3 enhancer sequence. Binds to mu E3 DNA sequence of the immunoglobulin heavy-chain gene enhancer. Acts as a transcriptional transactivator on the proximal promoter region of the tartrate-resistant acid phosphatase (TRAP) E-box containing promoter. Collaborates with MITF in target gene activation. Acts as a transcriptional repressor on minimal promoter containing mu E3 enhancer sequence. Binds to mu E3 DNA sequence of the immunoglobulin heavy-chain gene enhancer. Binds DNA in a homo- or heterodimeric form. This chain is Transcription factor EC (Tfec), found in Rattus norvegicus (Rat).